The primary structure comprises 947 residues: Protein translocase subunit SecA (947 aa).

Residues Q87, 105–109 (GEGKT), and D494 contribute to the ATP site. A disordered region spans residues 860–947 (TAPKPLPTQE…NRAPKSKRKR (88 aa)). A compositionally biased stretch (low complexity) spans 870 to 885 (AAARTTGTAAPTALRA). 2 stretches are compositionally biased toward basic and acidic residues: residues 903–914 (EDGKAKATRDSA) and 922–931 (ASRRERREAA).

This sequence belongs to the SecA family. In terms of assembly, monomer and homodimer. Part of the essential Sec protein translocation apparatus which comprises SecA, SecYEG and auxiliary proteins SecDF. Other proteins may also be involved.

It is found in the cell membrane. Its subcellular location is the cytoplasm. The enzyme catalyses ATP + H2O + cellular proteinSide 1 = ADP + phosphate + cellular proteinSide 2.. Part of the Sec protein translocase complex. Interacts with the SecYEG preprotein conducting channel. Has a central role in coupling the hydrolysis of ATP to the transfer of proteins into and across the cell membrane, serving as an ATP-driven molecular motor driving the stepwise translocation of polypeptide chains across the membrane. The chain is Protein translocase subunit SecA from Rhodococcus erythropolis (strain PR4 / NBRC 100887).